The sequence spans 189 residues: Interferon alpha-C (189 aa).

An N-terminal signal peptide occupies residues Met1–Gly23. Intrachain disulfides connect Cys24-Cys122 and Cys52-Cys162.

It belongs to the alpha/beta interferon family.

The protein localises to the secreted. Its function is as follows. Produced by macrophages, IFN-alpha have antiviral activities. Interferon stimulates the production of two enzymes: a protein kinase and an oligoadenylate synthetase. This chain is Interferon alpha-C (IFNAC), found in Bos taurus (Bovine).